The primary structure comprises 371 residues: Alanine dehydrogenase (371 aa).

Substrate contacts are provided by R15 and K75. H96 acts as the Proton donor/acceptor in catalysis. NAD(+)-binding positions include S134, 178–179 (TA), D198, K203, S220, 239–240 (VL), 267–270 (IAID), R279, and 298–301 (VANM). The active-site Proton donor/acceptor is D270. E323 and H327 together coordinate Mg(2+).

It belongs to the AlaDH/PNT family. Homohexamer. Trimer of dimers. The cofactor is Mg(2+).

It is found in the secreted. The catalysed reaction is L-alanine + NAD(+) + H2O = pyruvate + NH4(+) + NADH + H(+). The protein operates within amino-acid degradation; L-alanine degradation via dehydrogenase pathway; NH(3) and pyruvate from L-alanine: step 1/1. Functionally, catalyzes the reversible reductive amination of pyruvate to L-alanine. However, since the physiological environment of M.tuberculosis has a neutral pH, it can be assumed that the enzyme catalyzes exclusively the formation of L-alanine. May play a role in cell wall synthesis as L-alanine is an important constituent of the peptidoglycan layer. The polypeptide is Alanine dehydrogenase (ald) (Mycobacterium tuberculosis (strain CDC 1551 / Oshkosh)).